A 272-amino-acid polypeptide reads, in one-letter code: 3-methyl-2-oxobutanoate hydroxymethyltransferase (272 aa).

Mg(2+) contacts are provided by aspartate 51 and aspartate 90. Residues 51 to 52, aspartate 90, and lysine 120 contribute to the 3-methyl-2-oxobutanoate site; that span reads DS. Glutamate 122 is a Mg(2+) binding site. Catalysis depends on glutamate 189, which acts as the Proton acceptor.

It belongs to the PanB family. As to quaternary structure, homodecamer; pentamer of dimers. Requires Mg(2+) as cofactor.

It is found in the cytoplasm. It catalyses the reaction 3-methyl-2-oxobutanoate + (6R)-5,10-methylene-5,6,7,8-tetrahydrofolate + H2O = 2-dehydropantoate + (6S)-5,6,7,8-tetrahydrofolate. The protein operates within cofactor biosynthesis; (R)-pantothenate biosynthesis; (R)-pantoate from 3-methyl-2-oxobutanoate: step 1/2. Its function is as follows. Catalyzes the reversible reaction in which hydroxymethyl group from 5,10-methylenetetrahydrofolate is transferred onto alpha-ketoisovalerate to form ketopantoate. This is 3-methyl-2-oxobutanoate hydroxymethyltransferase from Syntrophus aciditrophicus (strain SB).